The sequence spans 495 residues: Alkaline protease 2 (495 aa).

The N-terminal stretch at 1–16 (MKGYLSLSILPLLVAA) is a signal peptide. Residues 17-136 (SPVVVDSIHN…IEKDSEVHTM (120 aa)) constitute a propeptide that is removed on maturation. The Inhibitor I9 domain maps to 43–136 (SYIVVFKKHV…IEKDSEVHTM (94 aa)). The 307-residue stretch at 146–452 (PWGLARISHR…GGSSNYTDII (307 aa)) folds into the Peptidase S8 domain. Active-site charge relay system residues include Asp182 and His214. N-linked (GlcNAc...) asparagine glycosylation occurs at Asn284. The Charge relay system role is filled by Ser380. 2 N-linked (GlcNAc...) asparagine glycosylation sites follow: Asn447 and Asn460.

The protein belongs to the peptidase S8 family.

The enzyme catalyses Hydrolysis of proteins with broad specificity, and of Bz-Arg-OEt &gt; Ac-Tyr-OEt. Does not hydrolyze peptide amides.. Alkaline protease that allows assimilation of proteinaceous substrates. Acts as a significant virulence factor in invasive aspergillosis. Required for regular sporulation. The chain is Alkaline protease 2 (alp2) from Aspergillus fumigatus (strain CBS 144.89 / FGSC A1163 / CEA10) (Neosartorya fumigata).